A 120-amino-acid polypeptide reads, in one-letter code: UPF0231 protein YacL (120 aa).

The protein belongs to the UPF0231 family.

In Salmonella agona (strain SL483), this protein is UPF0231 protein YacL.